We begin with the raw amino-acid sequence, 301 residues long: Cytochrome c biogenesis protein CcsA (301 aa).

8 consecutive transmembrane segments (helical) span residues asparagine 13–phenylalanine 33, valine 39–glycine 59, leucine 73–tyrosine 93, leucine 97–leucine 117, methionine 146–isoleucine 166, threonine 209–asparagine 229, tryptophan 236–leucine 256, and alanine 270–leucine 290.

The protein belongs to the CcmF/CycK/Ccl1/NrfE/CcsA family. May interact with Ccs1.

It localises to the plastid. The protein localises to the chloroplast thylakoid membrane. Required during biogenesis of c-type cytochromes (cytochrome c6 and cytochrome f) at the step of heme attachment. This Guillardia theta (Cryptophyte) protein is Cytochrome c biogenesis protein CcsA.